The following is a 208-amino-acid chain: Holliday junction branch migration complex subunit RuvA (208 aa).

Residues Met1–Ala64 form a domain I region. A domain II region spans residues Ser65–Val143. The interval Ala139–Ser162 is disordered. Residues Pro144 to Ala157 are flexible linker. The domain III stretch occupies residues Gly158–Arg208.

Belongs to the RuvA family. Homotetramer. Forms an RuvA(8)-RuvB(12)-Holliday junction (HJ) complex. HJ DNA is sandwiched between 2 RuvA tetramers; dsDNA enters through RuvA and exits via RuvB. An RuvB hexamer assembles on each DNA strand where it exits the tetramer. Each RuvB hexamer is contacted by two RuvA subunits (via domain III) on 2 adjacent RuvB subunits; this complex drives branch migration. In the full resolvosome a probable DNA-RuvA(4)-RuvB(12)-RuvC(2) complex forms which resolves the HJ.

It is found in the cytoplasm. The RuvA-RuvB-RuvC complex processes Holliday junction (HJ) DNA during genetic recombination and DNA repair, while the RuvA-RuvB complex plays an important role in the rescue of blocked DNA replication forks via replication fork reversal (RFR). RuvA specifically binds to HJ cruciform DNA, conferring on it an open structure. The RuvB hexamer acts as an ATP-dependent pump, pulling dsDNA into and through the RuvAB complex. HJ branch migration allows RuvC to scan DNA until it finds its consensus sequence, where it cleaves and resolves the cruciform DNA. The protein is Holliday junction branch migration complex subunit RuvA of Alkalilimnicola ehrlichii (strain ATCC BAA-1101 / DSM 17681 / MLHE-1).